Here is a 451-residue protein sequence, read N- to C-terminus: Trigger factor (451 aa).

The PPIase FKBP-type domain occupies 163–248; sequence GDIIDMEYTV…IKALYVNILP (86 aa).

The protein belongs to the FKBP-type PPIase family. Tig subfamily.

The protein localises to the cytoplasm. The catalysed reaction is [protein]-peptidylproline (omega=180) = [protein]-peptidylproline (omega=0). Involved in protein export. Acts as a chaperone by maintaining the newly synthesized protein in an open conformation. Functions as a peptidyl-prolyl cis-trans isomerase. The chain is Trigger factor from Leptospira borgpetersenii serovar Hardjo-bovis (strain JB197).